The primary structure comprises 198 residues: MSEVKLTAETRTEFGKGAARRIRRDNKVPGVLYGHGSDPLHLTLPGHELLLALRTSNVLIALDIDGKTNELAIPKSVQRDPIKGFLEHVDLQLVKRGETVSVEIPVQAEGELAPGGFLLEYVLDALPVEAEATHIPQQVTVSVAGLEAGASIHAKDIALPSGVKLDVDGDTVVLQVLSAQAEEAPAEGEGEGEGAAEA.

This sequence belongs to the bacterial ribosomal protein bL25 family. CTC subfamily. Part of the 50S ribosomal subunit; part of the 5S rRNA/L5/L18/L25 subcomplex. Contacts the 5S rRNA. Binds to the 5S rRNA independently of L5 and L18.

Functionally, this is one of the proteins that binds to the 5S RNA in the ribosome where it forms part of the central protuberance. This Streptomyces coelicolor (strain ATCC BAA-471 / A3(2) / M145) protein is Large ribosomal subunit protein bL25.